Here is a 754-residue protein sequence, read N- to C-terminus: 5-methyltetrahydropteroyltriglutamate--homocysteine methyltransferase (754 aa).

Residues 17–20 (RELK) and Lys117 each bind 5-methyltetrahydropteroyltri-L-glutamate. L-homocysteine contacts are provided by residues 431–433 (IGS) and Glu484. L-methionine is bound by residues 431 to 433 (IGS) and Glu484. 5-methyltetrahydropteroyltri-L-glutamate is bound by residues 515–516 (RC) and Trp561. Asp599 contacts L-homocysteine. Asp599 contributes to the L-methionine binding site. 5-methyltetrahydropteroyltri-L-glutamate is bound at residue Glu605. Residues His641, Cys643, and Glu665 each coordinate Zn(2+). The active-site Proton donor is the His694. Cys726 serves as a coordination point for Zn(2+).

It belongs to the vitamin-B12 independent methionine synthase family. Requires Zn(2+) as cofactor.

The catalysed reaction is 5-methyltetrahydropteroyltri-L-glutamate + L-homocysteine = tetrahydropteroyltri-L-glutamate + L-methionine. Its pathway is amino-acid biosynthesis; L-methionine biosynthesis via de novo pathway; L-methionine from L-homocysteine (MetE route): step 1/1. Catalyzes the transfer of a methyl group from 5-methyltetrahydrofolate to homocysteine resulting in methionine formation. This chain is 5-methyltetrahydropteroyltriglutamate--homocysteine methyltransferase, found in Salmonella paratyphi B (strain ATCC BAA-1250 / SPB7).